Here is a 341-residue protein sequence, read N- to C-terminus: MAMLTIVVDAMGGDNAPACVVEGTVEALRESGNRFEILLIGQEDKVTPLLKEYESESLNMRFMHAPEVITMEDVPAIAVKSKQESSLVQGLKLCKAKEADAFVSAGNTGAMMAASLFVLGRLPGVQRPTIYAYFPRLGEGLTNIVDVGANVDCKPEHLVQFAEMLTIYQRYAASIDNPTVGLLNIGEEEGKGPEYLKQTWNLLKAAAEEKKINFIGNVEGHDILAGKASIVVCDGLVGNTILKFGESIPHFLGSLFKPALEKMVVSGKLDQSAAALAGQAFKQIFEPFDVETFGGVPFLGVDGISIVGHGRSSSRAIKNMIYMAEHMIEQRVNERIAAMLS.

It belongs to the PlsX family. Homodimer. Probably interacts with PlsY.

It is found in the cytoplasm. It catalyses the reaction a fatty acyl-[ACP] + phosphate = an acyl phosphate + holo-[ACP]. The protein operates within lipid metabolism; phospholipid metabolism. Its function is as follows. Catalyzes the reversible formation of acyl-phosphate (acyl-PO(4)) from acyl-[acyl-carrier-protein] (acyl-ACP). This enzyme utilizes acyl-ACP as fatty acyl donor, but not acyl-CoA. This is Phosphate acyltransferase from Chlorobaculum parvum (strain DSM 263 / NCIMB 8327) (Chlorobium vibrioforme subsp. thiosulfatophilum).